The chain runs to 234 residues: Sugar fermentation stimulation protein homolog (234 aa).

This sequence belongs to the SfsA family.

The sequence is that of Sugar fermentation stimulation protein homolog from Shewanella sp. (strain ANA-3).